We begin with the raw amino-acid sequence, 1265 residues long: Cohesin subunit SA-1 (1265 aa).

Residues 1 to 16 (MITSELSVLQDSTNES) show a composition bias toward polar residues. 2 disordered regions span residues 1-21 (MITS…VMHT) and 37-91 (DLEV…EGDP). Residues 62–73 (TPGDRSRAEPGS) show a composition bias toward basic and acidic residues. An SCD domain is found at 303–388 (FVHRYRDAIA…NRFKDRIVSM (86 aa)). Disordered stretches follow at residues 1063–1097 (GDED…KRVI) and 1111–1130 (DTIQ…TVLR). The segment covering 1069 to 1082 (SVNSGGSNSKGSSV) has biased composition (low complexity). The span at 1083–1095 (RSKKGRPPLHKKR) shows a compositional bias: basic residues. A compositionally biased stretch (polar residues) spans 1111 to 1129 (DTIQTPGALTTPQLTSTVL).

It belongs to the SCC3 family. As to quaternary structure, interacts directly with RAD21 in cohesin complex. Cohesin complexes are composed of a heterodimer between and SMC3, which are attached via their hinge domain, and RAD21 which link them at their heads, and one STAG protein (STAG1 OR STAG2). In cohesin complexes, STAG1 is mutually exclusive with STAG2. Phosphorylated by PLK1. The large dissociation of cohesin from chromosome arms during prophase is partly due to its phosphorylation.

It is found in the nucleus. The protein resides in the chromosome. The protein localises to the centromere. Component of cohesin complex, a complex required for the cohesion of sister chromatids after DNA replication. The cohesin complex apparently forms a large proteinaceous ring within which sister chromatids can be trapped. At anaphase, the complex is cleaved and dissociates from chromatin, allowing sister chromatids to segregate. The cohesin complex may also play a role in spindle pole assembly during mitosis. This is Cohesin subunit SA-1 (stag1) from Xenopus laevis (African clawed frog).